Consider the following 341-residue polypeptide: UDP-3-O-acylglucosamine N-acyltransferase (341 aa).

H239 acts as the Proton acceptor in catalysis.

Belongs to the transferase hexapeptide repeat family. LpxD subfamily. Homotrimer.

The enzyme catalyses a UDP-3-O-[(3R)-3-hydroxyacyl]-alpha-D-glucosamine + a (3R)-hydroxyacyl-[ACP] = a UDP-2-N,3-O-bis[(3R)-3-hydroxyacyl]-alpha-D-glucosamine + holo-[ACP] + H(+). The protein operates within bacterial outer membrane biogenesis; LPS lipid A biosynthesis. Its function is as follows. Catalyzes the N-acylation of UDP-3-O-acylglucosamine using 3-hydroxyacyl-ACP as the acyl donor. Is involved in the biosynthesis of lipid A, a phosphorylated glycolipid that anchors the lipopolysaccharide to the outer membrane of the cell. The protein is UDP-3-O-acylglucosamine N-acyltransferase of Shewanella sp. (strain MR-7).